Here is a 476-residue protein sequence, read N- to C-terminus: MSAAAVILFPFIGILLLSQISSYRISSWLNTLFSFLSFVGSLFLLFKKDPPGSFFLVDELNIVFILLTNFIGFTTALFSQRYIAHEIEIGHLSPPSLRFYHSMYQALLFGMNLALCSNNIGLMWVSIEMATLSTVLMVGIYRTTESLEASWKYFILGGVGIALALFGTFLFYISARPTIGEGLAAMAWTNLFSHAAYLDSSLVNIGFIFILIGYGTKVGLFPLHGWLPDAHAEGPTPISAVLSGLLLNVALYAILRFKILLSANPHALQAGPLLTAMGLASVLFAALMFYKRRDIKRLFAYSSIEHMGIISFAFGIGGALANFAGLLHMSMHSLTKSAIFFAIGYISQIKRTQKIADLSGLTSSHPVLGWGLVFGVLAIAGLPPMGVFMSEFLVLSSAFARSPLLAACLAVGLITALGALILKLVQVSFGEPRGDSSPIRSLYLPMFSHFLLVFAAGVYIPPRVVEWFQHCSVLLK.

The next 12 helical transmembrane spans lie at 1–21 (MSAA…SQIS), 25–45 (ISSW…LFLL), 54–74 (FFLV…IGFT), 120–140 (IGLM…MVGI), 153–173 (YFIL…LFYI), 202–222 (LVNI…GLFP), 235–255 (PTPI…YAIL), 270–290 (AGPL…LMFY), 307–327 (MGII…AGLL), 368–388 (LGWG…MGVF), 402–422 (SPLL…ALIL), and 442–462 (LYLP…YIPP).

Belongs to the complex I subunit 5 family.

The protein localises to the cell inner membrane. The sequence is that of Hydrogenase-4 component F homolog (hyfF) from Methylacidiphilum infernorum (isolate V4) (Methylokorus infernorum (strain V4)).